The following is a 175-amino-acid chain: MKLLILDRDGVINYDSDAYIKTLEEWVPIPGSVDAIAQLSKAGWTVAVATNQSGIARGYYPLATLEAMHARLRALVAEQGGEVGHIVYCPHGPDEGCDCRKPKPGMLRAIAEHYQIGLEGVWFVGDSKGDLEAALAVGAQPVLVKTGKGERTLEKGVPETTLIFDDLAAIARELI.

Catalysis depends on D7, which acts as the Nucleophile. D7 and D9 together coordinate Mg(2+). Substrate is bound by residues 7-9 (DRD), 15-19 (DSDAY), and 50-53 (TNQS). The active-site Proton donor is D9. 4 residues coordinate Zn(2+): C89, H91, C97, and C99. Position 100 to 101 (100 to 101 (RK)) interacts with substrate. D126 contacts Mg(2+).

The protein belongs to the gmhB family. Monomer. Mg(2+) is required as a cofactor. Zn(2+) serves as cofactor.

Its subcellular location is the cytoplasm. It catalyses the reaction D-glycero-beta-D-manno-heptose 1,7-bisphosphate + H2O = D-glycero-beta-D-manno-heptose 1-phosphate + phosphate. Its pathway is nucleotide-sugar biosynthesis; ADP-L-glycero-beta-D-manno-heptose biosynthesis; ADP-L-glycero-beta-D-manno-heptose from D-glycero-beta-D-manno-heptose 7-phosphate: step 2/4. It participates in bacterial outer membrane biogenesis; LPS core biosynthesis. Its function is as follows. Converts the D-glycero-beta-D-manno-heptose 1,7-bisphosphate (beta-HBP) intermediate into D-glycero-beta-D-manno-heptose 1-phosphate by removing the phosphate group at the C-7 position. In Pseudomonas putida (strain ATCC 47054 / DSM 6125 / CFBP 8728 / NCIMB 11950 / KT2440), this protein is D-glycero-beta-D-manno-heptose-1,7-bisphosphate 7-phosphatase.